The chain runs to 246 residues: Complement C1q tumor necrosis factor-related protein 3 (246 aa).

An N-terminal signal peptide occupies residues 1-22; sequence MLGRQRIWWHLLPLLFLPFCLC. The Collagen-like domain maps to 51–113; that stretch reads GYQGPPGPPG…KGEKGYPGVP (63 aa). The interval 53 to 112 is disordered; that stretch reads QGPPGPPGPPGIPGNHGNNGNNGATGHEGAKGEKGDKGDLGPRGERGQHGPKGEKGYPGV. Positions 55-64 are enriched in pro residues; sequence PPGPPGPPGI. A compositionally biased stretch (low complexity) spans 65-74; it reads PGNHGNNGNN. Residues 80-107 show a composition bias toward basic and acidic residues; that stretch reads EGAKGEKGDKGDLGPRGERGQHGPKGEK. The 134-residue stretch at 113–246 folds into the C1q domain; that stretch reads PPELQIAFMA…FAGFLLFETK (134 aa).

It localises to the secreted. In Mus musculus (Mouse), this protein is Complement C1q tumor necrosis factor-related protein 3 (C1qtnf3).